The sequence spans 104 residues: L-rhamnose mutarotase (104 aa).

Position 18 (Tyr18) interacts with substrate. His22 acts as the Proton donor in catalysis. Substrate is bound by residues Tyr41 and 76 to 77 (WW).

The protein belongs to the rhamnose mutarotase family. Homodimer.

The protein localises to the cytoplasm. The enzyme catalyses alpha-L-rhamnose = beta-L-rhamnose. The protein operates within carbohydrate metabolism; L-rhamnose metabolism. In terms of biological role, involved in the anomeric conversion of L-rhamnose. This is L-rhamnose mutarotase from Klebsiella pneumoniae (strain 342).